We begin with the raw amino-acid sequence, 766 residues long: Semaphorin-4E (766 aa).

An N-terminal signal peptide occupies residues 1-24 (MMSLLAVLCVLYVWSPAMLTGGLG). Over 25-664 (STLDSLPRKT…LHHVKEKERT (640 aa)) the chain is Extracellular. The Sema domain maps to 27–499 (LDSLPRKTVP…SEVGVVQLSI (473 aa)). Asparagine 52 is a glycosylation site (N-linked (GlcNAc...) asparagine). 4 disulfides stabilise this stretch: cysteine 100–cysteine 111, cysteine 129–cysteine 138, cysteine 261–cysteine 373, and cysteine 285–cysteine 329. N-linked (GlcNAc...) asparagine glycosylation is present at asparagine 433. In terms of domain architecture, PSI spans 501–552 (ECGRYQTCLDCVLARDPHCGWDLDTEHCATINSIHRTRSSTVIQSLNDGDAS). 2 cysteine pairs are disulfide-bonded: cysteine 502/cysteine 519 and cysteine 511/cysteine 528. One can recognise an Ig-like C2-type domain in the interval 555 to 640 (PAIGVSKPVN…QRKYQTQHVA (86 aa)). 2 N-linked (GlcNAc...) asparagine glycosylation sites follow: asparagine 564 and asparagine 612. A disulfide bridge connects residues cysteine 577 and cysteine 623. The helical transmembrane segment at 665–685 (LVAMVVILSLVLAALLIWNLY) threads the bilayer. At 686–766 (KGHLSLPCLH…LKYIDDESEI (81 aa)) the chain is on the cytoplasmic side. A disordered region spans residues 724–750 (FNSNNNHANDQRYSSSRETDRLSTTAG).

It belongs to the semaphorin family.

Its subcellular location is the membrane. This is Semaphorin-4E (sema4e) from Danio rerio (Zebrafish).